The following is a 434-amino-acid chain: MFRRRPPLPPFPPGAALVGGAVRDWLRGVRSADYDWAHPDPAAGARALAALVGGAAFPLDEERGYWRVTAGEVQHDFVPLPPNLEDDLRRRDFTVNAIALREGRRLVDPLGGQQDLKRRVLRMVSEDNLRADPLRAWRAARFVTTLSFTLEPQTEQAVRQVAADLKAGRLPFPAWERVRDELHALLRSPDAARGILTLEALGLLDLTLPELREGQGLTQGGFHHLDVFEHGVEALHQLLTRRPDADLLLRWATLLHDVGKPRTFARDPDTGRRSFHGHDRVGAELTTQILTRLKLPGADVKRAAALVKAHMVQLPADDAQARRFVHRRRELLPDLLSLMLADREAARGPSSSELGRFAYMLAMERVLAALEEQPAAPPPLLSGKEVMALLGLTPGPRVGEVLRALAEARALGEVGTPQEARAFVQRWAEETPGS.

An ATP-binding site is contributed by Gly-20 to Arg-23. The Mg(2+) site is built by Asp-33 and Asp-35. ATP is bound by residues Arg-91 to Asp-92, Asn-96, Asp-132 to Arg-141, and Arg-177. An HD domain is found at Val-227 to Met-339.

It belongs to the tRNA nucleotidyltransferase/poly(A) polymerase family. The cofactor is Mg(2+).

The catalysed reaction is a tRNA with a 3' CC end + ATP = a tRNA with a 3' CCA end + diphosphate. In terms of biological role, tRNA nucleotidyltransferase involved in the synthesis of the tRNA CCA terminus. Adds the terminal adenosine residue to tRNA. This chain is A-adding tRNA nucleotidyltransferase, found in Deinococcus radiodurans (strain ATCC 13939 / DSM 20539 / JCM 16871 / CCUG 27074 / LMG 4051 / NBRC 15346 / NCIMB 9279 / VKM B-1422 / R1).